Consider the following 103-residue polypeptide: Large ribosomal subunit protein uL23 (103 aa).

The protein belongs to the universal ribosomal protein uL23 family. In terms of assembly, part of the 50S ribosomal subunit. Contacts protein L29, and trigger factor when it is bound to the ribosome.

Functionally, one of the early assembly proteins it binds 23S rRNA. One of the proteins that surrounds the polypeptide exit tunnel on the outside of the ribosome. Forms the main docking site for trigger factor binding to the ribosome. This Aquifex aeolicus (strain VF5) protein is Large ribosomal subunit protein uL23.